We begin with the raw amino-acid sequence, 292 residues long: Glutamyl-Q tRNA(Asp) synthetase (292 aa).

L-glutamate contacts are provided by residues 11-15 (RFAPS) and Glu-47. Residues 14–24 (PSPTGPLHFGS) carry the 'HIGH' region motif. Residues Cys-103, Cys-105, Tyr-116, and Cys-120 each contribute to the Zn(2+) site. 2 residues coordinate L-glutamate: Tyr-173 and Arg-191. The 'KMSKS' region motif lies at 229-233 (KLSKQ). Residue Lys-232 participates in ATP binding.

Belongs to the class-I aminoacyl-tRNA synthetase family. GluQ subfamily. It depends on Zn(2+) as a cofactor.

Functionally, catalyzes the tRNA-independent activation of glutamate in presence of ATP and the subsequent transfer of glutamate onto a tRNA(Asp). Glutamate is transferred on the 2-amino-5-(4,5-dihydroxy-2-cyclopenten-1-yl) moiety of the queuosine in the wobble position of the QUC anticodon. This is Glutamyl-Q tRNA(Asp) synthetase from Acinetobacter baylyi (strain ATCC 33305 / BD413 / ADP1).